The following is a 379-amino-acid chain: MKLYEFEAKEIAKNNGIPVPRGGIAKTPEEARIVAEKIGGEVVLKAQVLVGRRGLAGGVLFASNSLEAEKVARELFSKRVRGEKVELILVEEKICIDKEYYLSLTIDRSNREIVYLVSPLGGVEIEELVKKYPDKLLRIRVDPVIGYKPYMSRLAAKFLGLPKELWPSMHKIMNSMYNIMKNYDADLVEFNPLVKTCSNEIVAVDAKITIDDNSLYRHIEFAEKYGRELSEMEAIAKKLGFSYVELDGDIGIMCNGAGLTMATMDMVAYYGGRPANFLDIGGGASRERVREAAKLLLKHDKVKVLLVNIFGGITRCNEVARGIIEAVEETGVKKPIVIRLLGTNEEIGRRLLEEKGYSVFSEADDAVKKAVEIAKNLSR.

Positions Lys9–Ile235 constitute an ATP-grasp domain. Lys45, Glu91, Ile94, and Glu99 together coordinate ATP. 2 residues coordinate Mg(2+): Asn191 and Asp205. Residues Asn255 and Gly312–Thr314 each bind substrate.

This sequence belongs to the succinate/malate CoA ligase beta subunit family. In terms of assembly, heterotetramer of two alpha and two beta subunits. Mg(2+) serves as cofactor.

The catalysed reaction is succinate + ATP + CoA = succinyl-CoA + ADP + phosphate. The enzyme catalyses GTP + succinate + CoA = succinyl-CoA + GDP + phosphate. Its pathway is carbohydrate metabolism; tricarboxylic acid cycle; succinate from succinyl-CoA (ligase route): step 1/1. Succinyl-CoA synthetase functions in the citric acid cycle (TCA), coupling the hydrolysis of succinyl-CoA to the synthesis of either ATP or GTP and thus represents the only step of substrate-level phosphorylation in the TCA. The beta subunit provides nucleotide specificity of the enzyme and binds the substrate succinate, while the binding sites for coenzyme A and phosphate are found in the alpha subunit. This Staphylothermus marinus (strain ATCC 43588 / DSM 3639 / JCM 9404 / F1) protein is Succinate--CoA ligase [ADP-forming] subunit beta.